The following is a 225-amino-acid chain: MKIVVPIMPTSLEEAQALELSRFEGADIIEWRADFLDKHSILTVAPAIFEKFAGFEIVFTIRTTREGGKIELTDGEYVTLIKDVAAIYSPDYIDFEYFTRKEVFDQMLEFSNLVLSYHNFEETPENLMELLSEMTNLTPRVVKVAVMPKNEQDVLDLMNFTRGFKAFNPEQEFVTMSMGKLGRLSRLAGDLVGSSWTFASLDNTSAPGQVALADMCRIREVLDAD.

3-dehydroquinate-binding positions include 30 to 32 (EWR) and arginine 62. Histidine 118 functions as the Proton donor/acceptor in the catalytic mechanism. The active-site Schiff-base intermediate with substrate is the lysine 143. 3-dehydroquinate is bound by residues arginine 186, serine 205, and glutamine 209.

This sequence belongs to the type-I 3-dehydroquinase family. As to quaternary structure, homodimer.

It catalyses the reaction 3-dehydroquinate = 3-dehydroshikimate + H2O. The protein operates within metabolic intermediate biosynthesis; chorismate biosynthesis; chorismate from D-erythrose 4-phosphate and phosphoenolpyruvate: step 3/7. Its function is as follows. Involved in the third step of the chorismate pathway, which leads to the biosynthesis of aromatic amino acids. Catalyzes the cis-dehydration of 3-dehydroquinate (DHQ) and introduces the first double bond of the aromatic ring to yield 3-dehydroshikimate. This Streptococcus thermophilus (strain ATCC BAA-491 / LMD-9) protein is 3-dehydroquinate dehydratase.